The chain runs to 294 residues: Non-selective voltage-gated ion channel VDAC2 (294 aa).

Ala-2 carries the post-translational modification N-acetylalanine. 2 residues coordinate ATP: Lys-23 and Lys-31. Position 31 is an N6-acetyllysine; alternate (Lys-31). Lys-31 bears the N6-succinyllysine; alternate mark. Residue Lys-31 forms a Glycyl lysine isopeptide (Lys-Gly) (interchain with G-Cter in ubiquitin); alternate linkage. 2 beta stranded membrane-spanning segments follow: residues 37-46 and 50-58; these read LVKLDVKTKS and VEFSTSGSS. Lys-64 participates in a covalent cross-link: Glycyl lysine isopeptide (Lys-Gly) (interchain with G-Cter in ubiquitin). A beta stranded transmembrane segment spans residues 65 to 75; the sequence is VTGTLETKYKW. At Tyr-78 the chain carries Phosphotyrosine. 3 consecutive transmembrane segments (beta stranded) span residues 80-87, 91-100, and 106-115; these read LTFTEKWN, TLGTEIAIED, and LKLTFDTTFS. Thr-118 is modified (phosphothreonine). N6-acetyllysine; alternate is present on Lys-120. A Glycyl lysine isopeptide (Lys-Gly) (interchain with G-Cter in ubiquitin); alternate cross-link involves residue Lys-120. A Glycyl lysine isopeptide (Lys-Gly) (interchain with G-Cter in ubiquitin) cross-link involves residue Lys-121. Transmembrane regions (beta stranded) follow at residues 122 to 131, 134 to 141, 148 to 156, and 161 to 169; these read SGKIKSSYKR, INLGCDVD, AIHGSAVFG, and LAGYQMTFD. Residue Lys-172 forms a Glycyl lysine isopeptide (Lys-Gly) (interchain with G-Cter in ubiquitin) linkage. Beta stranded transmembrane passes span 174 to 186, 189 to 196, 200 to 209, 213 to 222, 229 to 238, and 242 to 249; these read KLTR…GYRT, FQLHTNVN, EFGGSIYQKV, LDTSVNLAWT, RFGIAAKYQL, and ASISAKVN. Ser-251 carries the post-translational modification Phosphoserine. NAD(+) contacts are provided by residues 253-255 and 271-275; these read LIG and SALVD. The next 2 beta stranded transmembrane spans lie at 253–262 and 265–274; these read LIGVGYTQTL and GVKLTLSALV. Lys-277 is modified (N6-acetyllysine; alternate). Lys-277 is covalently cross-linked (Glycyl lysine isopeptide (Lys-Gly) (interchain with G-Cter in ubiquitin); alternate). A beta stranded membrane pass occupies residues 284 to 293; the sequence is HKLGLALELE.

The protein belongs to the eukaryotic mitochondrial porin family. As to quaternary structure, monomer, homodimer and higher order oligomers; formation of higher order structures is necessary for scramblase activity. Interacts with ARMC12 in a TBC1D21-dependent manner. Interacts with KLC3. Interacts with SPATA33. Interacts with PPP3CC in a SPATA33-dependent manner. In terms of processing, ubiquitinated by PRKN during mitophagy, leading to its degradation and enhancement of mitophagy. Deubiquitinated by USP30.

The protein localises to the mitochondrion outer membrane. Its subcellular location is the membrane. The catalysed reaction is chloride(in) = chloride(out). It catalyses the reaction K(+)(in) = K(+)(out). The enzyme catalyses a 1,2-diacyl-sn-glycero-3-phospho-L-serine(in) = a 1,2-diacyl-sn-glycero-3-phospho-L-serine(out). It carries out the reaction a 1,2-diacyl-sn-glycero-3-phosphocholine(in) = a 1,2-diacyl-sn-glycero-3-phosphocholine(out). The catalysed reaction is a 1,2-diacyl-sn-glycero-3-phospho-(1D-myo-inositol)(in) = a 1,2-diacyl-sn-glycero-3-phospho-(1D-myo-inositol)(out). Its function is as follows. Non-selective voltage-gated ion channel that mediates the transport of anions and cations through the mitochondrion outer membrane and plasma membrane. The channel adopts an open conformation at zero mV and a closed conformation at both positive and negative potentials. There are two populations of channels; the main that functions in a lower open-state conductance with lower ion selectivity, that switch, in a voltage-dependent manner, from the open to a low-conducting 'closed' state and the other that has a normal ion selectivity in the typical high conductance, 'open' state. Binds various lipids, including the sphingolipid ceramide, the phospholipid phosphatidylcholine, and the sterols cholesterol and oxysterol. Binding of ceramide promotes the mitochondrial outer membrane permeabilization (MOMP) apoptotic pathway. Catalyzes the scrambling of phospholipids across the outer mitochondrial membrane; the mechanism is unrelated to channel activity and is capable of translocating both anionic and zwitterionic phospholipids. The protein is Non-selective voltage-gated ion channel VDAC2 of Bos taurus (Bovine).